A 263-amino-acid chain; its full sequence is Pyridoxine 5'-phosphate synthase (263 aa).

Residue asparagine 15 coordinates 3-amino-2-oxopropyl phosphate. 17-18 (DH) is a 1-deoxy-D-xylulose 5-phosphate binding site. Arginine 26 serves as a coordination point for 3-amino-2-oxopropyl phosphate. The active-site Proton acceptor is histidine 51. The 1-deoxy-D-xylulose 5-phosphate site is built by arginine 53 and histidine 58. The active-site Proton acceptor is the glutamate 78. Residue threonine 108 participates in 1-deoxy-D-xylulose 5-phosphate binding. Histidine 199 acts as the Proton donor in catalysis. 3-amino-2-oxopropyl phosphate-binding positions include glycine 200 and 221–222 (GH).

It belongs to the PNP synthase family. As to quaternary structure, homooctamer; tetramer of dimers.

The protein resides in the cytoplasm. It catalyses the reaction 3-amino-2-oxopropyl phosphate + 1-deoxy-D-xylulose 5-phosphate = pyridoxine 5'-phosphate + phosphate + 2 H2O + H(+). Its pathway is cofactor biosynthesis; pyridoxine 5'-phosphate biosynthesis; pyridoxine 5'-phosphate from D-erythrose 4-phosphate: step 5/5. In terms of biological role, catalyzes the complicated ring closure reaction between the two acyclic compounds 1-deoxy-D-xylulose-5-phosphate (DXP) and 3-amino-2-oxopropyl phosphate (1-amino-acetone-3-phosphate or AAP) to form pyridoxine 5'-phosphate (PNP) and inorganic phosphate. The polypeptide is Pyridoxine 5'-phosphate synthase (Ralstonia nicotianae (strain ATCC BAA-1114 / GMI1000) (Ralstonia solanacearum)).